Here is a 528-residue protein sequence, read N- to C-terminus: Phosphoenolpyruvate carboxykinase (ATP) (528 aa).

Residues Arg56, Tyr192, and Lys198 each contribute to the substrate site. Residues Lys198, His217, and 233 to 241 each bind ATP; that span reads GLSGTGKTT. Lys198 and His217 together coordinate Mn(2+). Residue Asp254 participates in Mn(2+) binding. ATP contacts are provided by Glu282, Arg319, and Thr444. Arg319 contributes to the substrate binding site.

Belongs to the phosphoenolpyruvate carboxykinase (ATP) family. It depends on Mn(2+) as a cofactor.

It is found in the cytoplasm. The enzyme catalyses oxaloacetate + ATP = phosphoenolpyruvate + ADP + CO2. It functions in the pathway carbohydrate biosynthesis; gluconeogenesis. Involved in the gluconeogenesis. Catalyzes the conversion of oxaloacetate (OAA) to phosphoenolpyruvate (PEP) through direct phosphoryl transfer between the nucleoside triphosphate and OAA. This Bacillus cereus (strain G9842) protein is Phosphoenolpyruvate carboxykinase (ATP).